The sequence spans 223 residues: Octanoyltransferase (223 aa).

Residues 30-214 (DLDRDCFLLT…IVADLFGEFT (185 aa)) form the BPL/LPL catalytic domain. Residues 75–82 (RGGEITYH), 144–146 (SIG), and 157–159 (GFA) contribute to the substrate site. Cys175 serves as the catalytic Acyl-thioester intermediate.

It belongs to the LipB family.

Its subcellular location is the cytoplasm. It carries out the reaction octanoyl-[ACP] + L-lysyl-[protein] = N(6)-octanoyl-L-lysyl-[protein] + holo-[ACP] + H(+). The protein operates within protein modification; protein lipoylation via endogenous pathway; protein N(6)-(lipoyl)lysine from octanoyl-[acyl-carrier-protein]: step 1/2. Its function is as follows. Catalyzes the transfer of endogenously produced octanoic acid from octanoyl-acyl-carrier-protein onto the lipoyl domains of lipoate-dependent enzymes. Lipoyl-ACP can also act as a substrate although octanoyl-ACP is likely to be the physiological substrate. The protein is Octanoyltransferase of Desulfotalea psychrophila (strain LSv54 / DSM 12343).